We begin with the raw amino-acid sequence, 394 residues long: S-adenosylmethionine synthase (394 aa).

His-18 contacts ATP. Asp-20 serves as a coordination point for Mg(2+). Glu-46 is a binding site for K(+). Positions 59 and 104 each coordinate L-methionine. A flexible loop region spans residues Gln-104–Ala-114. ATP-binding positions include Asp-174–Lys-176, Lys-240–Phe-241, Asp-249, Arg-255–Lys-256, Ala-272, and Lys-276. Asp-249 contributes to the L-methionine binding site. Lys-280 contributes to the L-methionine binding site.

This sequence belongs to the AdoMet synthase family. In terms of assembly, homotetramer; dimer of dimers. Mg(2+) serves as cofactor. K(+) is required as a cofactor.

It localises to the cytoplasm. It catalyses the reaction L-methionine + ATP + H2O = S-adenosyl-L-methionine + phosphate + diphosphate. It participates in amino-acid biosynthesis; S-adenosyl-L-methionine biosynthesis; S-adenosyl-L-methionine from L-methionine: step 1/1. Catalyzes the formation of S-adenosylmethionine (AdoMet) from methionine and ATP. The overall synthetic reaction is composed of two sequential steps, AdoMet formation and the subsequent tripolyphosphate hydrolysis which occurs prior to release of AdoMet from the enzyme. The protein is S-adenosylmethionine synthase of Akkermansia muciniphila (strain ATCC BAA-835 / DSM 22959 / JCM 33894 / BCRC 81048 / CCUG 64013 / CIP 107961 / Muc).